Reading from the N-terminus, the 212-residue chain is Small ribosomal subunit protein uS2 (212 aa).

The tract at residues leucine 190–valine 212 is disordered.

It belongs to the universal ribosomal protein uS2 family.

This Ignicoccus hospitalis (strain KIN4/I / DSM 18386 / JCM 14125) protein is Small ribosomal subunit protein uS2.